The primary structure comprises 749 residues: Fibronectin type III and SPRY domain-containing protein 2 (749 aa).

A coiled-coil region spans residues 205-317 (LNEALESAKD…TIEEMCHEEK (113 aa)). 2 Fibronectin type-III domains span residues 375 to 470 (PVIN…TAPS) and 471 to 564 (PPII…TIGS). One can recognise a B30.2/SPRY domain in the interval 546–744 (NMGGPSVRSE…KVHNGISMPK (199 aa)).

Interacts with CMYA5. In cardiac muscles, identified in a complex composed of FSD2, CMYA5 and RYR2.

It localises to the nucleus. Its subcellular location is the sarcoplasmic reticulum. The protein localises to the cytoplasm. It is found in the perinuclear region. In Homo sapiens (Human), this protein is Fibronectin type III and SPRY domain-containing protein 2 (FSD2).